The following is a 1496-amino-acid chain: DENN domain-containing protein 4B (1496 aa).

An MABP domain is found at 44 to 203; the sequence is AEPITDVAVI…AVYLCYKVGL (160 aa). The region spanning 195 to 369 is the uDENN domain; the sequence is VYLCYKVGLA…NVPFPSPQRP (175 aa). Residues 390–526 enclose the cDENN domain; it reads PLPLSGASFL…PYKVLLATLT (137 aa). One can recognise a dDENN domain in the interval 528–644; sequence LYQQLDQTYT…ECSFGSARHA (117 aa). A disordered region spans residues 720–744; the sequence is QPGALPVPGPSRSAPSSPAPRRTKQ. Low complexity predominate over residues 729–739; the sequence is PSRSAPSSPAP. PPR repeat units follow at residues 775–811 and 812–846; these read WFLC…VVLP and DEVC…GIVP. Disordered regions lie at residues 891 to 970, 995 to 1055, 1067 to 1119, and 1205 to 1227; these read LRER…ARGA, VPWH…TPRR, PSRH…GSEW, and SRPS…PVPG. Positions 896–912 are enriched in low complexity; that stretch reads QQQQQQQQQQQQQQQEQ. 2 stretches are compositionally biased toward polar residues: residues 913–924 and 935–944; these read VSAHQEAGSSQA and RPLQRQTTWA. Ser-953 is subject to Phosphoserine. Pro residues predominate over residues 1075–1090; sequence RIPPPELPPDLPPPAR. The residue at position 1092 (Ser-1092) is a Phosphoserine. A compositionally biased stretch (low complexity) spans 1105 to 1119; it reads GSTASESSASLGSEW.

It is found in the golgi apparatus. In terms of biological role, guanine nucleotide exchange factor (GEF) which may activate RAB10. Promotes the exchange of GDP to GTP, converting inactive GDP-bound Rab proteins into their active GTP-bound form. The sequence is that of DENN domain-containing protein 4B (DENND4B) from Homo sapiens (Human).